Reading from the N-terminus, the 473-residue chain is Serine carboxypeptidase-like 42 (473 aa).

The N-terminal stretch at 1-26 (MASVSWRAVAVAMVVVLLSLQWFAKG) is a signal peptide. 3 disulfides stabilise this stretch: cysteine 87/cysteine 346, cysteine 247/cysteine 264, and cysteine 289/cysteine 314. An N-linked (GlcNAc...) asparagine glycan is attached at asparagine 138. Serine 179 is a catalytic residue. A glycan (N-linked (GlcNAc...) asparagine) is linked at asparagine 259. 2 N-linked (GlcNAc...) asparagine glycosylation sites follow: asparagine 335 and asparagine 351. Residues aspartate 383 and histidine 440 contribute to the active site. Asparagine 465 carries N-linked (GlcNAc...) asparagine glycosylation.

This sequence belongs to the peptidase S10 family. In terms of tissue distribution, expression not detected.

The protein resides in the secreted. Functionally, probable carboxypeptidase. This chain is Serine carboxypeptidase-like 42 (SCPL42), found in Arabidopsis thaliana (Mouse-ear cress).